A 263-amino-acid polypeptide reads, in one-letter code: Ribosomal RNA small subunit methyltransferase A (263 aa).

S-adenosyl-L-methionine-binding residues include asparagine 20, leucine 22, glycine 47, glutamate 68, aspartate 90, and asparagine 110.

Belongs to the class I-like SAM-binding methyltransferase superfamily. rRNA adenine N(6)-methyltransferase family. RsmA subfamily.

Its subcellular location is the cytoplasm. The catalysed reaction is adenosine(1518)/adenosine(1519) in 16S rRNA + 4 S-adenosyl-L-methionine = N(6)-dimethyladenosine(1518)/N(6)-dimethyladenosine(1519) in 16S rRNA + 4 S-adenosyl-L-homocysteine + 4 H(+). Its function is as follows. Specifically dimethylates two adjacent adenosines (A1518 and A1519) in the loop of a conserved hairpin near the 3'-end of 16S rRNA in the 30S particle. May play a critical role in biogenesis of 30S subunits. The protein is Ribosomal RNA small subunit methyltransferase A of Chlorobium limicola (strain DSM 245 / NBRC 103803 / 6330).